Consider the following 445-residue polypeptide: Glutamate-1-semialdehyde 2,1-aminomutase (445 aa).

Lysine 263 is subject to N6-(pyridoxal phosphate)lysine.

The protein belongs to the class-III pyridoxal-phosphate-dependent aminotransferase family. HemL subfamily. The cofactor is pyridoxal 5'-phosphate.

It localises to the cytoplasm. It catalyses the reaction (S)-4-amino-5-oxopentanoate = 5-aminolevulinate. Its pathway is porphyrin-containing compound metabolism; protoporphyrin-IX biosynthesis; 5-aminolevulinate from L-glutamyl-tRNA(Glu): step 2/2. The chain is Glutamate-1-semialdehyde 2,1-aminomutase from Halorubrum lacusprofundi (strain ATCC 49239 / DSM 5036 / JCM 8891 / ACAM 34).